The sequence spans 74 residues: DNA-directed RNA polymerase subunit omega (74 aa).

It belongs to the RNA polymerase subunit omega family. In terms of assembly, the RNAP catalytic core consists of 2 alpha, 1 beta, 1 beta' and 1 omega subunit. When a sigma factor is associated with the core the holoenzyme is formed, which can initiate transcription.

It catalyses the reaction RNA(n) + a ribonucleoside 5'-triphosphate = RNA(n+1) + diphosphate. Promotes RNA polymerase assembly. Latches the N- and C-terminal regions of the beta' subunit thereby facilitating its interaction with the beta and alpha subunits. The sequence is that of DNA-directed RNA polymerase subunit omega from Marinomonas sp. (strain MWYL1).